The chain runs to 140 residues: Putative pre-16S rRNA nuclease (140 aa).

Belongs to the YqgF nuclease family.

It is found in the cytoplasm. Functionally, could be a nuclease involved in processing of the 5'-end of pre-16S rRNA. This chain is Putative pre-16S rRNA nuclease, found in Aeromonas salmonicida (strain A449).